Here is a 469-residue protein sequence, read N- to C-terminus: Arginine biosynthesis bifunctional protein ArgJ, chloroplastic (469 aa).

Substrate-binding residues include Thr-213, Lys-239, Thr-250, Glu-337, Asn-464, and Thr-469. Residue Thr-250 is the Nucleophile of the active site.

It belongs to the ArgJ family. Heterodimer of an alpha and a beta chain.

The protein localises to the plastid. Its subcellular location is the chloroplast. It catalyses the reaction N(2)-acetyl-L-ornithine + L-glutamate = N-acetyl-L-glutamate + L-ornithine. It carries out the reaction L-glutamate + acetyl-CoA = N-acetyl-L-glutamate + CoA + H(+). Its pathway is amino-acid biosynthesis; L-arginine biosynthesis; L-ornithine and N-acetyl-L-glutamate from L-glutamate and N(2)-acetyl-L-ornithine (cyclic): step 1/1. It functions in the pathway amino-acid biosynthesis; L-arginine biosynthesis; N(2)-acetyl-L-ornithine from L-glutamate: step 1/4. Functionally, catalyzes two activities which are involved in the cyclic version of arginine biosynthesis: the synthesis of acetylglutamate from glutamate and acetyl-CoA, and of ornithine by transacetylation between acetylornithine and glutamate. The sequence is that of Arginine biosynthesis bifunctional protein ArgJ, chloroplastic from Ricinus communis (Castor bean).